We begin with the raw amino-acid sequence, 230 residues long: UPF0500 protein C1orf216 homolog (230 aa).

Residues 1–103 (MFAAIQPGLA…AEPEKLSGAS (103 aa)) are disordered. Residues 60-73 (RSSSESPSDNQVFQ) show a composition bias toward polar residues. A compositionally biased stretch (low complexity) spans 85–94 (PPEGAEIPGA).

This sequence belongs to the UPF0500 family.

The protein is UPF0500 protein C1orf216 homolog of Mus musculus (Mouse).